The primary structure comprises 1557 residues: DVA-1 polyprotein (1557 aa).

A signal peptide spans 1–21 (MKSTSFITLLLLSYFIVEAHS). A propeptide spanning residues 22 to 60 (SIFHWDDERLFKHDDTHSWLTDVQKAELETLKHQPIQLR) is cleaved from the precursor. The N-linked (GlcNAc...) asparagine glycan is linked to N997.

This sequence belongs to the NPA family. In terms of processing, nematode polyprotein allergens (NPAs) are synthesized as large polypeptides that are subsequently proteolytically cleaved to active polypeptide units.

Has high binding affinity for fatty acids and retinoids. This chain is DVA-1 polyprotein (DVA-1), found in Dictyocaulus viviparus (Bovine lungworm).